A 286-amino-acid polypeptide reads, in one-letter code: D-tagatose-1,6-bisphosphate aldolase subunit KbaY (286 aa).

Asp-82 (proton donor) is an active-site residue. Zn(2+) contacts are provided by His-83 and His-180. Gly-181 provides a ligand contact to dihydroxyacetone phosphate. His-208 serves as a coordination point for Zn(2+). Dihydroxyacetone phosphate-binding positions include 209–211 and 230–233; these read GAS and NVAT.

The protein belongs to the class II fructose-bisphosphate aldolase family. TagBP aldolase KbaY subfamily. As to quaternary structure, homotetramer. Forms a complex with KbaZ. Zn(2+) serves as cofactor.

It carries out the reaction D-tagatofuranose 1,6-bisphosphate = D-glyceraldehyde 3-phosphate + dihydroxyacetone phosphate. It participates in carbohydrate metabolism; D-tagatose 6-phosphate degradation; D-glyceraldehyde 3-phosphate and glycerone phosphate from D-tagatose 6-phosphate: step 2/2. Catalytic subunit of the tagatose-1,6-bisphosphate aldolase KbaYZ, which catalyzes the reversible aldol condensation of dihydroxyacetone phosphate (DHAP or glycerone-phosphate) with glyceraldehyde 3-phosphate (G3P) to produce tagatose 1,6-bisphosphate (TBP). Requires KbaZ subunit for full activity and stability. The chain is D-tagatose-1,6-bisphosphate aldolase subunit KbaY from Escherichia coli O45:K1 (strain S88 / ExPEC).